Here is a 963-residue protein sequence, read N- to C-terminus: Trehalose synthase (963 aa).

Position 60 (aspartate 60) interacts with substrate. Asparagine 100 contributes to the Ca(2+) binding site. Substrate contacts are provided by histidine 101 and glutamine 165. Residue aspartate 167 coordinates Ca(2+). Arginine 195 serves as a coordination point for substrate. Aspartate 197 functions as the Nucleophile in the catalytic mechanism. The Ca(2+) site is built by tyrosine 201, leucine 202, and glutamate 204. Glutamate 240 functions as the Proton donor in the catalytic mechanism. Residues histidine 305 and aspartate 306 each coordinate substrate.

The protein belongs to the glycosyl hydrolase 13 family. TreS subfamily.

It carries out the reaction D-maltose = alpha,alpha-trehalose. Catalyzes the reversible interconversion of maltose and alpha,alpha-trehalose by transglucosylation. The chain is Trehalose synthase (treS) from Thermus thermophilus.